Here is a 331-residue protein sequence, read N- to C-terminus: GTPase Obg (331 aa).

The 159-residue stretch at 1-159 (MHFIDEVKIY…MWIHLRLKLL (159 aa)) folds into the Obg domain. One can recognise an OBG-type G domain in the interval 160–327 (SDVGLIGLPN…IVKLALEIIK (168 aa)). GTP contacts are provided by residues 166–173 (GLPNAGKS), 191–195 (FTTLV), 212–215 (DIPG), 279–282 (NKCD), and 308–310 (STY). Residues S173 and T193 each contribute to the Mg(2+) site.

This sequence belongs to the TRAFAC class OBG-HflX-like GTPase superfamily. OBG GTPase family. As to quaternary structure, monomer. The cofactor is Mg(2+).

Its subcellular location is the cytoplasm. Its function is as follows. An essential GTPase which binds GTP, GDP and possibly (p)ppGpp with moderate affinity, with high nucleotide exchange rates and a fairly low GTP hydrolysis rate. Plays a role in control of the cell cycle, stress response, ribosome biogenesis and in those bacteria that undergo differentiation, in morphogenesis control. The polypeptide is GTPase Obg (Rickettsia prowazekii (strain Madrid E)).